The primary structure comprises 411 residues: Bifunctional protein GlmU (411 aa).

The interval 1–204 (MDAIILCAGK…NGKLHGIELN (204 aa)) is pyrophosphorylase. UTP is bound by residues 6–9 (LCAG), Gln-74, and Gly-79. Thr-80, Gly-130, Asn-142, and Asn-158 together coordinate N-acetyl-alpha-D-glucosamine 1-phosphate. The linker stretch occupies residues 205 to 224 (GYWNDIGHPWDVLSANNRFL). An N-acetyltransferase region spans residues 225 to 411 (NKIISKVSGK…DELVITKKRN (187 aa)). Catalysis depends on His-308, which acts as the Proton acceptor. The acetyl-CoA site is built by Ala-384 and Lys-401.

It in the N-terminal section; belongs to the N-acetylglucosamine-1-phosphate uridyltransferase family. The protein in the C-terminal section; belongs to the transferase hexapeptide repeat family.

The catalysed reaction is N-acetyl-alpha-D-glucosamine 1-phosphate + UTP + H(+) = UDP-N-acetyl-alpha-D-glucosamine + diphosphate. It catalyses the reaction alpha-D-glucosamine 1-phosphate + acetyl-CoA = N-acetyl-alpha-D-glucosamine 1-phosphate + CoA + H(+). The protein operates within nucleotide-sugar biosynthesis; UDP-N-acetyl-alpha-D-glucosamine biosynthesis; N-acetyl-alpha-D-glucosamine 1-phosphate from alpha-D-glucosamine 6-phosphate (route II): step 2/2. Its pathway is nucleotide-sugar biosynthesis; UDP-N-acetyl-alpha-D-glucosamine biosynthesis; UDP-N-acetyl-alpha-D-glucosamine from N-acetyl-alpha-D-glucosamine 1-phosphate: step 1/1. Catalyzes the last two sequential reactions in the de novo biosynthetic pathway for UDP-N-acetyl-glucosamine (UDP-GlcNAc). Responsible for the acetylation of GlcN-1-P to GlcNAc-1-P, and for the uridyl transfer from UTP to GlcNAc-1-P, to produce UDP-GlcNAc and pyrophosphate. In Methanococcus maripaludis (strain C7 / ATCC BAA-1331), this protein is Bifunctional protein GlmU.